We begin with the raw amino-acid sequence, 814 residues long: Oxysterol-binding protein-related protein 1C (814 aa).

Residues 103 to 235 (GNGIAGILYK…WVEALQAVKD (133 aa)) form the PH domain. Residues 300–367 (LLIDTLRQLE…AEEEFDEEEN (68 aa)) are a coiled coil. Disordered regions lie at residues 319 to 366 (VVDE…DEEE) and 379 to 411 (SSFK…PSIK). A compositionally biased stretch (acidic residues) spans 347-366 (ESDDDNERGDAAEEEFDEEE). Residues 379–394 (SSFKSSGSGFRTSSFS) show a composition bias toward low complexity. Positions 395–407 (SDEDGFESEDDID) are enriched in acidic residues.

The protein belongs to the OSBP family. In terms of tissue distribution, expressed in roots, leaves, stems, flowers and pollen.

Its function is as follows. May be involved in the transport of sterols. In Arabidopsis thaliana (Mouse-ear cress), this protein is Oxysterol-binding protein-related protein 1C (ORP1C).